The following is a 152-amino-acid chain: DNA-binding transcriptional activator DecR (152 aa).

The HTH asnC-type domain occupies 2–63; that stretch reads LDKIDRKLLA…LLDPEKIGLG (62 aa). The H-T-H motif DNA-binding region spans 21-40; sequence LQALAEAVNLTTTPCWKRLK.

Its function is as follows. Plays a role in L-cysteine detoxification. Binds to the dlsT(yhaO)-yhaM operon promoter in the presence but not absence of L-cysteine; activates transcription from the dlsT(yhaO)-yhaM operon. The sequence is that of DNA-binding transcriptional activator DecR (decR) from Escherichia coli O157:H7.